A 184-amino-acid chain; its full sequence is Putative manganese efflux pump MntP (184 aa).

The next 6 membrane-spanning stretches (helical) occupy residues 12 to 32, 39 to 59, 63 to 83, 99 to 119, 132 to 152, and 164 to 184; these read SIMAFALGMDAFSVGLGMGMI, IIYIGLVIGIFHMFMPLFGML, LLSGWLGLLATYIGGALLLVL, FIAPVGAGLVLFATSVSLDSF, VWMTILLFGFFSMILTWLGLL, and YSGALGGIILLAFGIKLLFPL.

It belongs to the MntP (TC 9.B.29) family.

It localises to the cell membrane. Probably functions as a manganese efflux pump. This Bacillus pumilus (strain SAFR-032) protein is Putative manganese efflux pump MntP.